Consider the following 448-residue polypeptide: Doublesex- and mab-3-related transcription factor A2 (448 aa).

The segment at residues 57 to 104 (CARCRNHGVVSALKGHKRYCRWKDCMCAKCTLIAERQRVMAAQVALRR) is a DNA-binding region (DM). Over residues 166–187 (SQLSGSATPQQSVGKPASTESD) the composition is skewed to polar residues. Residues 166–259 (SQLSGSATPQ…SPSSAASRHM (94 aa)) form a disordered region. Over residues 229–239 (GSVSSLGSDSG) the composition is skewed to low complexity. The DMA domain maps to 259-294 (MNAIDILTRVFPSHKRSVQELVLQGCGKDVVRAIEQ).

This sequence belongs to the DMRT family.

It is found in the nucleus. Functionally, may be involved in sexual development. This Monopterus albus (Swamp eel) protein is Doublesex- and mab-3-related transcription factor A2 (dmrta2).